Consider the following 1208-residue polypeptide: Spindle pole body protein pcp1 (1208 aa).

The span at 1–17 (MSERDFNTQSPKFKDEN) shows a compositional bias: basic and acidic residues. The tract at residues 1–91 (MSERDFNTQS…DKYNGSLGDK (91 aa)) is disordered. Polar residues predominate over residues 48 to 64 (NDKSSFQTPLRNGSYQP). 4 coiled-coil regions span residues 151–375 (LREQ…KENQ), 387–803 (TDSM…ANIE), 874–1091 (GTET…QSTQ), and 1177–1204 (ERMK…AKAK). Position 906 is a phosphoserine (serine 906).

In terms of assembly, interacts with ccq1.

The protein localises to the nucleus. Its subcellular location is the cytoplasm. It localises to the cytoskeleton. It is found in the microtubule organizing center. The protein resides in the spindle pole body. In terms of biological role, spindle pole body component that binds calmodulin. Overexpression of pcp1 causes the formation of supernumerary SPB-like structures and disrupts both mitotic spindle assembly and chromosome segregation. The sequence is that of Spindle pole body protein pcp1 (pcp1) from Schizosaccharomyces pombe (strain 972 / ATCC 24843) (Fission yeast).